Consider the following 357-residue polypeptide: Alanine racemase (357 aa).

K33 serves as the catalytic Proton acceptor; specific for D-alanine. Position 33 is an N6-(pyridoxal phosphate)lysine (K33). R129 is a substrate binding site. Y253 (proton acceptor; specific for L-alanine) is an active-site residue. M301 lines the substrate pocket.

This sequence belongs to the alanine racemase family. Pyridoxal 5'-phosphate serves as cofactor.

The catalysed reaction is L-alanine = D-alanine. Its pathway is amino-acid biosynthesis; D-alanine biosynthesis; D-alanine from L-alanine: step 1/1. Functionally, catalyzes the interconversion of L-alanine and D-alanine. May also act on other amino acids. The sequence is that of Alanine racemase (alr) from Pseudomonas entomophila (strain L48).